The chain runs to 352 residues: Thiamine-phosphate synthase (352 aa).

The tract at residues 1 to 128 (MNPTPSETSL…AAEAAAIRYG (128 aa)) is unknown. Residues 63–85 (SYKQARSTSTDTGAGLKHPAQLD) form a disordered region. The interval 129–352 (LYDLEVTCLN…LLQQLDQATI (224 aa)) is thiamine-phosphate synthase. 4-amino-2-methyl-5-(diphosphooxymethyl)pyrimidine contacts are provided by residues 180-184 (QYRCK) and Asn212. Positions 213 and 232 each coordinate Mg(2+). 4-amino-2-methyl-5-(diphosphooxymethyl)pyrimidine-binding residues include Ser251 and Lys280. Gly307 is a 2-[(2R,5Z)-2-carboxy-4-methylthiazol-5(2H)-ylidene]ethyl phosphate binding site.

It belongs to the thiamine-phosphate synthase family. The cofactor is Mg(2+).

It carries out the reaction 2-[(2R,5Z)-2-carboxy-4-methylthiazol-5(2H)-ylidene]ethyl phosphate + 4-amino-2-methyl-5-(diphosphooxymethyl)pyrimidine + 2 H(+) = thiamine phosphate + CO2 + diphosphate. The enzyme catalyses 2-(2-carboxy-4-methylthiazol-5-yl)ethyl phosphate + 4-amino-2-methyl-5-(diphosphooxymethyl)pyrimidine + 2 H(+) = thiamine phosphate + CO2 + diphosphate. It catalyses the reaction 4-methyl-5-(2-phosphooxyethyl)-thiazole + 4-amino-2-methyl-5-(diphosphooxymethyl)pyrimidine + H(+) = thiamine phosphate + diphosphate. It functions in the pathway cofactor biosynthesis; thiamine diphosphate biosynthesis; thiamine phosphate from 4-amino-2-methyl-5-diphosphomethylpyrimidine and 4-methyl-5-(2-phosphoethyl)-thiazole: step 1/1. Functionally, condenses 4-methyl-5-(beta-hydroxyethyl)thiazole monophosphate (THZ-P) and 2-methyl-4-amino-5-hydroxymethyl pyrimidine pyrophosphate (HMP-PP) to form thiamine monophosphate (TMP). In Synechococcus sp. (strain CC9605), this protein is Thiamine-phosphate synthase.